The chain runs to 483 residues: S-adenosylhomocysteine hydrolase-like protein 1 (483 aa).

A disordered region spans residues 1 to 56 (MQEFTKFPTKTGRRSLSRSISQSSTDSYSSAASYTDSSDDEVSPREKQQTNSKGSS). The segment covering 17–36 (SRSISQSSTDSYSSAASYTD) has biased composition (low complexity). The segment at 18–45 (RSISQSSTDSYSSAASYTDSSDDEVSPR) is PEST. Residue Ser-21 is modified to Phosphoserine; by PKD. Phosphoserine is present on residues Ser-24, Ser-27, Ser-30, and Ser-37. The interval 91–154 (QGEKPLAGAK…EAGVAVFAWK (64 aa)) is interaction with BCL2L10. Positions 108, 182, 207, 237, and 241 each coordinate substrate. The tract at residues 234-401 (SVTKQKFDNL…EGRLLNLSCS (168 aa)) is NAD binding. Residues 271 to 275 (GYGEV), Glu-294, and Asn-329 contribute to the NAD(+) site. Position 344 is a phosphoserine (Ser-344). 350 to 352 (MGH) lines the NAD(+) pocket. The tract at residues 473–483 (NGPFKPNYYRY) is PDZ-binding.

It belongs to the adenosylhomocysteinase family. In terms of assembly, forms multimers. Forms heteromultimers with AHCYL2 (via the C-terminal region). Interacts (when phosphorylated) with ITPR1 (when not phosphorylated); the interaction suppresses inositol 1,4,5-trisphosphate binding to ITPR1. Interacts with BCL2L10; this strengthens the interaction of AHCYL1 with ITPR1. Interacts with CFTR and SLC26A6; the interactions take place once AHCYL1 is released from ITPR1 and increase CFTR and SLC26A6 activities. Interacts with RRM1; in a phosphorylation- and (dATP)-dependent manner. Interacts (via PEST domain when phosphorylated) with SLC4A4 isoform 1 but not isoform 2; the interaction increases SLC4A4 isoform 1 activity. Interacts (when phosphorylated) with SLC9A3; the interaction is required for SLC9A3 apical location and activity. Interacts (when phosphorylated) with FIP1L1; the interaction is direct and associates AHCYL1 with the CPSF complex and RNA. Interacts with PAPOLA. Interacts with ZCCHC4. Interacts with AHCY. NAD(+) serves as cofactor. In terms of processing, phosphorylated at Ser/Thr residues between Ser-21 and Thr-25 in the PEST region: required for interaction with dATP-bound RRM1 and ITPR1. Phosphorylation at Ser-21 by PRKD1 and CAMK4 is required for further phosphorylations by CSNK1A1. Phosphorylation is induced by oxidative stress. Probably phosphorylated by CAMK2A; phosphorylation at Ser-21 may be required for interaction with SLC9A3. Dephosphorylated in response to apoptotic stress conditions which causes translocation of both AHCYL1 and BCL2L10 from mitochondria-associated endoplasmic reticulum membranes and promotes apoptosis. In terms of tissue distribution, expressed in kidney proximal tubules and outer medulla (at protein level).

It is found in the endoplasmic reticulum. The protein localises to the cytoplasm. Its subcellular location is the cytosol. It localises to the apical cell membrane. The protein resides in the microsome. In terms of biological role, multifaceted cellular regulator which coordinates several essential cellular functions including regulation of epithelial HCO3(-) and fluid secretion, mRNA processing and DNA replication. Regulates ITPR1 sensitivity to inositol 1,4,5-trisphosphate, competing for the common binding site and acting as endogenous 'pseudoligand' whose inhibitory activity can be modulated by its phosphorylation status. Promotes the formation of contact points between the endoplasmic reticulum (ER) and mitochondria, facilitating transfer of Ca(2+) from the ER to mitochondria. Under normal cellular conditions, functions cooperatively with BCL2L10 to limit ITPR1-mediated Ca(2+) release but, under apoptotic stress conditions, dephosphorylated which promotes dissociation of both AHCYL1 and BCL2L10 from mitochondria-associated endoplasmic reticulum membranes, inhibits BCL2L10 interaction with ITPR1 and leads to increased Ca(2+) transfer to mitochondria which promotes apoptosis. In the pancreatic and salivary ducts, at resting state, attenuates inositol 1,4,5-trisphosphate-induced calcium release by interacting with ITPR1. When extracellular stimuli induce ITPR1 phosphorylation or inositol 1,4,5-trisphosphate production, dissociates from ITPR1 to interact with CFTR and SLC26A6, mediating their synergistic activation by calcium and cAMP that stimulates the epithelial secretion of electrolytes and fluid. Also activates basolateral SLC4A4 isoform 1 to coordinate fluid and HCO3(-) secretion. Inhibits the effect of STK39 on SLC4A4 and CFTR by recruiting PP1 phosphatase which activates SLC4A4, SLC26A6 and CFTR through dephosphorylation. Mediates the induction of SLC9A3 surface expression produced by Angiotensin-2. Depending on the cell type, activates SLC9A3 in response to calcium or reverses SLC9A3R2-dependent calcium inhibition. May modulate the polyadenylation state of specific mRNAs, both by controlling the subcellular location of FIP1L1 and by inhibiting PAPOLA activity, in response to a stimulus that alters its phosphorylation state. Acts as a (dATP)-dependent inhibitor of ribonucleotide reductase large subunit RRM1, controlling the endogenous dNTP pool and ensuring normal cell cycle progression. In vitro does not exhibit any S-adenosyl-L-homocysteine hydrolase activity. In Rattus norvegicus (Rat), this protein is S-adenosylhomocysteine hydrolase-like protein 1.